A 359-amino-acid chain; its full sequence is TGACG-sequence-specific DNA-binding protein TGA-1A (359 aa).

Residues 44–54 (KRLDNETEDTS) show a composition bias toward basic and acidic residues. Positions 44–72 (KRLDNETEDTSHGTVGTSNRYEPETSKPV) are disordered. The region spanning 72-135 (VEKVLRRLAQ…GGVDASQLSY (64 aa)) is the bZIP domain. Residues 73-125 (EKVLRRLAQNREAARKSRLRKKAYVQQLENSKLKLIQLEQELERARKQGMCVG) adopt a coiled-coil conformation. A basic motif region spans residues 74 to 94 (KVLRRLAQNREAARKSRLRKK). Positions 100-114 (LENSKLKLIQLEQEL) are leucine-zipper. The 212-residue stretch at 143-354 (TAVFDMEYGH…RVLSSQWATR (212 aa)) folds into the DOG1 domain.

Belongs to the bZIP family. Binds DNA as a dimer.

It is found in the nucleus. In terms of biological role, transcriptional activator that binds specifically to the DNA sequence 5'-TGACG-3'. Recognizes ocs elements like the as-1 motif of the cauliflower mosaic virus 35S promoter. Binding to the as-1-like cis elements mediate auxin- and salicylic acid-inducible transcription. Could also bind to the Hex-motif (5'-TGACGTGG-3') another cis-acting element found in plant histone promoters. The chain is TGACG-sequence-specific DNA-binding protein TGA-1A (TGA1A) from Nicotiana tabacum (Common tobacco).